A 495-amino-acid chain; its full sequence is Ribosomal protein uS12 methylthiotransferase RimO (495 aa).

Residues 5 to 121 (RTVALVTLGC…ISDRLQTILN (117 aa)) form the MTTase N-terminal domain. Positions 14, 50, and 84 each coordinate [4Fe-4S] cluster. Residues 145-183 (QSAGADVALPGHGAPEGLPEDLPEGLAPESGPRAPLRRR) form a disordered region. A Radical SAM core domain is found at 184–415 (LDGSPVASVK…RLAEELVAQR (232 aa)). Residues C198, C202, and C205 each coordinate [4Fe-4S] cluster. One can recognise a TRAM domain in the interval 417 to 484 (EERVGETVHV…GVDLVAEPLP (68 aa)).

It belongs to the methylthiotransferase family. RimO subfamily. Requires [4Fe-4S] cluster as cofactor.

It localises to the cytoplasm. The enzyme catalyses L-aspartate(89)-[ribosomal protein uS12]-hydrogen + (sulfur carrier)-SH + AH2 + 2 S-adenosyl-L-methionine = 3-methylsulfanyl-L-aspartate(89)-[ribosomal protein uS12]-hydrogen + (sulfur carrier)-H + 5'-deoxyadenosine + L-methionine + A + S-adenosyl-L-homocysteine + 2 H(+). In terms of biological role, catalyzes the methylthiolation of an aspartic acid residue of ribosomal protein uS12. The sequence is that of Ribosomal protein uS12 methylthiotransferase RimO from Streptomyces avermitilis (strain ATCC 31267 / DSM 46492 / JCM 5070 / NBRC 14893 / NCIMB 12804 / NRRL 8165 / MA-4680).